A 214-amino-acid chain; its full sequence is Putative archaetidylserine decarboxylase proenzyme (214 aa).

S180 (schiff-base intermediate with substrate; via pyruvic acid) is an active-site residue. S180 is subject to Pyruvic acid (Ser); by autocatalysis.

The protein belongs to the phosphatidylserine decarboxylase family. PSD-A subfamily. As to quaternary structure, heterodimer of a large membrane-associated beta subunit and a small pyruvoyl-containing alpha subunit. Pyruvate is required as a cofactor. Post-translationally, is synthesized initially as an inactive proenzyme. Formation of the active enzyme involves a self-maturation process in which the active site pyruvoyl group is generated from an internal serine residue via an autocatalytic post-translational modification. Two non-identical subunits are generated from the proenzyme in this reaction, and the pyruvate is formed at the N-terminus of the alpha chain, which is derived from the carboxyl end of the proenzyme. The post-translation cleavage follows an unusual pathway, termed non-hydrolytic serinolysis, in which the side chain hydroxyl group of the serine supplies its oxygen atom to form the C-terminus of the beta chain, while the remainder of the serine residue undergoes an oxidative deamination to produce ammonia and the pyruvoyl prosthetic group on the alpha chain.

It is found in the cell membrane. It carries out the reaction archaetidylserine + H(+) = archaetidylethanolamine + CO2. Catalyzes the formation of archaetidylethanolamine (PtdEtn) from archaetidylserine (PtdSer). This is Putative archaetidylserine decarboxylase proenzyme from Methanopyrus kandleri (strain AV19 / DSM 6324 / JCM 9639 / NBRC 100938).